A 575-amino-acid chain; its full sequence is 2-succinyl-5-enolpyruvyl-6-hydroxy-3-cyclohexene-1-carboxylate synthase (575 aa).

Belongs to the TPP enzyme family. MenD subfamily. As to quaternary structure, homodimer. Requires Mg(2+) as cofactor. Mn(2+) serves as cofactor. Thiamine diphosphate is required as a cofactor.

The enzyme catalyses isochorismate + 2-oxoglutarate + H(+) = 5-enolpyruvoyl-6-hydroxy-2-succinyl-cyclohex-3-ene-1-carboxylate + CO2. It participates in quinol/quinone metabolism; 1,4-dihydroxy-2-naphthoate biosynthesis; 1,4-dihydroxy-2-naphthoate from chorismate: step 2/7. It functions in the pathway quinol/quinone metabolism; menaquinone biosynthesis. Its function is as follows. Catalyzes the thiamine diphosphate-dependent decarboxylation of 2-oxoglutarate and the subsequent addition of the resulting succinic semialdehyde-thiamine pyrophosphate anion to isochorismate to yield 2-succinyl-5-enolpyruvyl-6-hydroxy-3-cyclohexene-1-carboxylate (SEPHCHC). This is 2-succinyl-5-enolpyruvyl-6-hydroxy-3-cyclohexene-1-carboxylate synthase from Syntrophus aciditrophicus (strain SB).